A 495-amino-acid chain; its full sequence is Sialin (495 aa).

Over residues 1–18 (MRSPVRDLARNDGEESTD) the composition is skewed to basic and acidic residues. A disordered region spans residues 1–24 (MRSPVRDLARNDGEESTDRTPLLP). The Cytoplasmic segment spans residues 1–41 (MRSPVRDLARNDGEESTDRTPLLPGAPRAEAAPVCCSARYN). Phosphoserine is present on Ser-3. Positions 22 to 23 (LL) match the Dileucine internalization motif motif. A helical membrane pass occupies residues 42–62 (LAILAFFGFFIVYALRVNLSV). At 63-109 (ALVDMVDSNTTLEDNRTSKACPEHSAPIKVHHNQTGKKYQWDAETQG) the chain is on the lumenal side. Asn-71, Asn-77, and Asn-95 each carry an N-linked (GlcNAc...) asparagine glycan. A helical membrane pass occupies residues 110-130 (WILGSFFYGYIITQIPGGYVA). The Cytoplasmic segment spans residues 131 to 136 (SKIGGK). A helical transmembrane segment spans residues 137–157 (MLLGFGILGTAVLTLFTPIAA). Asp-158 is a topological domain (lumenal). The helical transmembrane segment at 159–179 (LGVGPLIVLRALEGLGEGVTF) threads the bilayer. Residues 180-200 (PAMHAMWSSWAPPLERSKLLS) are Cytoplasmic-facing. The helical transmembrane segment at 201–221 (ISYAGAQLGTVISLPLSGIIC) threads the bilayer. Topologically, residues 222–227 (YYMNWT) are lumenal. Residues 228–248 (YVFYFFGTIGIFWFLLWIWLV) traverse the membrane as a helical segment. Over 249 to 279 (SDTPQKHKRISHYEKEYILSSLRNQLSSQKS) the chain is Cytoplasmic. Residues 280–300 (VPWVPILKSLPLWAIVVAHFS) form a helical membrane-spanning segment. Residues 301–328 (YNWTFYTLLTLLPTYMKEILRFNVQENG) are Lumenal-facing. A helical transmembrane segment spans residues 329–349 (FLSSLPYLGSWLCMILSGQAA). Residues 350 to 365 (DNLRAKWNFSTLCVRR) are Cytoplasmic-facing. Residues 366–386 (IFSLIGMIGPAVFLVAAGFIG) form a helical membrane-spanning segment. The Lumenal portion of the chain corresponds to 387–391 (CDYSL). A helical transmembrane segment spans residues 392-412 (AVAFLTISTTLGGFCSSGFSI). At 413 to 423 (NHLDIAPSYAG) the chain is on the cytoplasmic side. The chain crosses the membrane as a helical span at residues 424 to 444 (ILLGITNTFATIPGMVGPVIA). The Lumenal portion of the chain corresponds to 445-457 (KSLTPDNTVGEWQ). A helical membrane pass occupies residues 458-478 (TVFYIAAAINVFGAIFFTLFA). Residues 479–495 (KGEVQNWALNDHHGHRH) are Cytoplasmic-facing.

It belongs to the major facilitator superfamily. Sodium/anion cotransporter family. In the adult, detected in placenta, kidney and pancreas. Abundant in the endothelial cells of tumors from ovary, colon, breast and lung, but is not detected in endothelial cells from the corresponding normal tissues. Highly expressed in salivary glands and liver, with lower levels of expression in brain, spleen kidney, muscle and pancreas. Expressed in acinar cells of salivary glands (at protein level).

Its subcellular location is the basolateral cell membrane. It localises to the cytoplasmic vesicle. The protein localises to the secretory vesicle. The protein resides in the synaptic vesicle membrane. It is found in the lysosome membrane. The catalysed reaction is N-acetylneuraminate(in) + H(+)(in) = N-acetylneuraminate(out) + H(+)(out). It catalyses the reaction D-glucuronate(out) + H(+)(out) = D-glucuronate(in) + H(+)(in). It carries out the reaction 2 nitrate(out) + H(+)(out) = 2 nitrate(in) + H(+)(in). The enzyme catalyses L-aspartate(out) = L-aspartate(in). The catalysed reaction is L-glutamate(out) = L-glutamate(in). It catalyses the reaction N-acetyl-L-aspartyl-L-glutamate(out) = N-acetyl-L-aspartyl-L-glutamate(in). Functionally, multifunctional anion transporter that operates via two distinct transport mechanisms, namely proton-coupled anion cotransport and membrane potential-dependent anion transport. Electroneutral proton-coupled acidic monosaccharide symporter, with a sugar to proton stoichiometry of 1:1. Exports glucuronic acid and free sialic acid derived from sialoglycoconjugate degradation out of lysosomes, driven by outwardly directed lysosomal pH gradient. May regulate lysosome function and metabolism of sialylated conjugates that impact oligodendrocyte lineage differentiation and myelinogenesis in the central nervous system. Electrogenic proton-coupled nitrate symporter that transports nitrate ions across the basolateral membrane of salivary gland acinar cells, with nitrate to proton stoichiometry of 2:1. May contribute to nitrate clearance from serum by salivary glands, where it is further concentrated and secreted in the saliva. Uses membrane potential to drive the uptake of acidic amino acids and peptides into synaptic vesicles. Responsible for synaptic vesicular storage of L-aspartate and L-glutamate in pinealocytes as well as vesicular uptake of N-acetyl-L-aspartyl-L-glutamate neuropeptide, relevant to aspartegic-associated glutamatergic neurotransmission and activation of metabotropic receptors that inhibit subsequent transmitter release. In terms of biological role, receptor for CM101, a polysaccharide produced by group B Streptococcus with antipathoangiogenic properties. The polypeptide is Sialin (SLC17A5) (Homo sapiens (Human)).